A 467-amino-acid chain; its full sequence is Calcium-binding protein P (467 aa).

Composition is skewed to pro residues over residues 1-10 (MQNPQNPPPA) and 45-62 (QYPP…PPYP). Residues 1–311 (MQNPQNPPPA…GAYPGQPPMG (311 aa)) are disordered. The XYPPX signature appears at 45-49 (QYPPQ). Residues 63–74 (GTQQPGAPGAPG) are compositionally biased toward low complexity. Short sequence motifs (XYPPX) lie at residues 75 to 79 (QYPPQ), 83 to 87 (QYPPQ), 94 to 98 (QYPPQ), 104 to 108 (GYPPQ), 115 to 119 (QYPPQ), 125 to 129 (GYPPQ), 136 to 140 (QYPPQ), 146 to 150 (QYPPQ), 157 to 161 (QYPPQ), 165 to 169 (QYPPQ), 176 to 180 (AYPPQ), 187 to 191 (AYPPQ), 221 to 225 (GVPPQ), 238 to 242 (AYPPQ), 247 to 251 (AYPPQ), 256 to 260 (AYPPQ), and 275 to 279 (AYPPQ). Pro residues-rich tracts occupy residues 75 to 109 (QYPP…PPQQ) and 118 to 131 (PQQP…PQQP). Residues 132 to 145 (GAPGQYPPQQGQPG) are compositionally biased toward low complexity. Low complexity-rich tracts occupy residues 153–193 (GQPG…PQQG) and 215–246 (AYPG…GQPG). A compositionally biased stretch (low complexity) spans 253-311 (QPGAYPPQQQQVAYPGQQPPMGAYPPQQGAYPGQQGAYPGQQGAYPGQQGAYPGQPPMG). 2 consecutive EF-hand domains span residues 399 to 434 (QKMM…LGYY) and 435 to 467 (FSKG…WSMQ). Ca(2+)-binding residues include Asp-412, Asn-414, Ser-416, Thr-418, and Glu-423.

The chain is Calcium-binding protein P (cbpP) from Dictyostelium discoideum (Social amoeba).